Here is a 275-residue protein sequence, read N- to C-terminus: uncharacterized protein (275 aa).

Belongs to the MtfA family.

This is an uncharacterized protein from Synechocystis sp. (strain ATCC 27184 / PCC 6803 / Kazusa).